The sequence spans 149 residues: D-aminoacyl-tRNA deacylase (149 aa).

Residues 137–138 carry the Gly-cisPro motif, important for rejection of L-amino acids motif; the sequence is GP.

The protein belongs to the DTD family. As to quaternary structure, homodimer.

The protein localises to the cytoplasm. It carries out the reaction glycyl-tRNA(Ala) + H2O = tRNA(Ala) + glycine + H(+). It catalyses the reaction a D-aminoacyl-tRNA + H2O = a tRNA + a D-alpha-amino acid + H(+). An aminoacyl-tRNA editing enzyme that deacylates mischarged D-aminoacyl-tRNAs. Also deacylates mischarged glycyl-tRNA(Ala), protecting cells against glycine mischarging by AlaRS. Acts via tRNA-based rather than protein-based catalysis; rejects L-amino acids rather than detecting D-amino acids in the active site. By recycling D-aminoacyl-tRNA to D-amino acids and free tRNA molecules, this enzyme counteracts the toxicity associated with the formation of D-aminoacyl-tRNA entities in vivo and helps enforce protein L-homochirality. This Syntrophomonas wolfei subsp. wolfei (strain DSM 2245B / Goettingen) protein is D-aminoacyl-tRNA deacylase.